A 284-amino-acid polypeptide reads, in one-letter code: Pantothenate synthetase (284 aa).

30–37 (MGALHEGH) is a binding site for ATP. H37 serves as the catalytic Proton donor. Q61 serves as a coordination point for (R)-pantoate. Position 61 (Q61) interacts with beta-alanine. 147–150 (GEKD) provides a ligand contact to ATP. Residue Q153 participates in (R)-pantoate binding. ATP contacts are provided by residues V176 and 184–187 (TSSR).

It belongs to the pantothenate synthetase family. In terms of assembly, homodimer.

The protein localises to the cytoplasm. The enzyme catalyses (R)-pantoate + beta-alanine + ATP = (R)-pantothenate + AMP + diphosphate + H(+). Its pathway is cofactor biosynthesis; (R)-pantothenate biosynthesis; (R)-pantothenate from (R)-pantoate and beta-alanine: step 1/1. Catalyzes the condensation of pantoate with beta-alanine in an ATP-dependent reaction via a pantoyl-adenylate intermediate. In Chlorobaculum tepidum (strain ATCC 49652 / DSM 12025 / NBRC 103806 / TLS) (Chlorobium tepidum), this protein is Pantothenate synthetase.